We begin with the raw amino-acid sequence, 1958 residues long: Callose synthase 7 (1958 aa).

The tract at residues 1-29 (MASTSSGGRGEDGRPPQMQPVRSMSRKMT) is disordered. Over 1-504 (MASTSSGGRG…LYRSFDRMWM (504 aa)) the chain is Cytoplasmic. The chain crosses the membrane as a helical span at residues 505–525 (FLVLSLQTMIIVAWHPSGSIL). The Extracellular portion of the chain corresponds to 526 to 535 (AIFTEDVFRN). Residues 536–556 (VLTIFITSAFLNLLQATLDLV) form a helical membrane-spanning segment. The Cytoplasmic segment spans residues 557–569 (LSFGAWKSLKFSQ). A helical transmembrane segment spans residues 570-590 (IMRYITKFLMAAMWAIMLPIT). Topologically, residues 591-620 (YSKSVQNPTGLIKFFSSWVGSWLHRSLYDY) are extracellular. The helical transmembrane segment at 621 to 641 (AIALYVLPNILAAVFFLLPPL) threads the bilayer. The Cytoplasmic portion of the chain corresponds to 642 to 673 (RRIMERSNMRIVTLIMWWAQPKLYIGRGMHEE). The chain crosses the membrane as a helical span at residues 674–694 (MFALFKYTFFWVMLLLSKLAF). The Extracellular segment spans residues 695–730 (SYYVEILPLVNPTKLIWDMHVVNYEWHEFFPNATHN). The chain crosses the membrane as a helical span at residues 731–751 (IGVIIAIWGPIVLVYFMDTQI). The Cytoplasmic portion of the chain corresponds to 752 to 1496 (WYAIFSTLFG…FDFYRMLSFY (745 aa)). A helical transmembrane segment spans residues 1497–1517 (FTTVGFYFSSMITVLTVYVFL). Topologically, residues 1518–1547 (YGRLYLVLSGLEKNILQSASVHESNALEQA) are extracellular. Residues 1548-1568 (LAAQSVFQLGFLMVLPMVMEI) form a helical membrane-spanning segment. Residues 1569-1576 (GLEKGFRT) lie on the Cytoplasmic side of the membrane. Residues 1577-1597 (ALGDFIIMQLQLASVFFTFQL) form a helical membrane-spanning segment. Residues 1598-1640 (GTKAHYFGRTILHGGSKYRATGRGFVVFHAKFAENYRLYSRSH) lie on the Extracellular side of the membrane. The chain crosses the membrane as a helical span at residues 1641-1661 (FVKGLELVILLVVYQVYGTSY). The Cytoplasmic portion of the chain corresponds to 1662-1667 (RSSSTY). The helical transmembrane segment at 1668 to 1688 (MYITFSMWFLVTSWLFAPFIF) threads the bilayer. Residues 1689–1742 (NPSGFEWQKTVDDWTDWKRWMGNRGGIGIVLDKSWESWWDIEQEHLKHTNLRGR) are Extracellular-facing. Residues 1743–1763 (VLEILLALRFLLYQYGIVYHL) traverse the membrane as a helical segment. Topologically, residues 1764–1771 (NIARRHTT) are cytoplasmic. Residues 1772–1792 (FLVYGLSWAILLSVLLVLKMV) traverse the membrane as a helical segment. Residues 1793–1812 (SMGRRKFGTDFQVMFRILKA) lie on the Extracellular side of the membrane. The helical transmembrane segment at 1813 to 1833 (LLFLGFLSVMTVLFVVCGLTI) threads the bilayer. At 1834 to 1835 (SD) the chain is on the cytoplasmic side. A helical transmembrane segment spans residues 1836–1856 (LFASILAFLPTGWAILLIGQA). The Extracellular portion of the chain corresponds to 1857-1878 (LRSVFKGLGFWDSVKELGRAYE). Residues 1879-1899 (YIMGLVIFTPIAVLSWFPFVS) traverse the membrane as a helical segment. At 1900-1958 (EFQTRLLFNQAFSRGLQISMILAGKKDKETPSTKYLGHTEESFGLEHDTNTFNHYYLWT) the chain is on the cytoplasmic side.

Belongs to the glycosyltransferase 48 family.

Its subcellular location is the cell membrane. The catalysed reaction is [(1-&gt;3)-beta-D-glucosyl](n) + UDP-alpha-D-glucose = [(1-&gt;3)-beta-D-glucosyl](n+1) + UDP + H(+). Involved in callose synthesis at the forming cell plate during cytokinesis. During plant growth and development, callose is found as a transitory component of the cell plate in dividing cells, is a major component of pollen mother cell walls and pollen tubes, and is found as a structural component of plasmodesmatal canals. The chain is Callose synthase 7 (CALS7) from Arabidopsis thaliana (Mouse-ear cress).